Reading from the N-terminus, the 250-residue chain is Accessory gland-specific peptide 26Aa (250 aa).

Residues 1-18 (MNQILLCSQILLLFFTVA) form the signal peptide. The interval 79 to 100 (DYPINNSKSRKNSSTLPSPILT) is disordered. The segment covering 82 to 95 (INNSKSRKNSSTLP) has biased composition (polar residues). N83, N90, and N131 each carry an N-linked (GlcNAc...) asparagine glycan. Disordered regions lie at residues 172-191 (NVQN…SKDI) and 230-250 (NNPA…PSTT). Residues 178 to 187 (KSTKSCKKRP) are compositionally biased toward basic residues. Residues 240–250 (KSPSEGNPSTT) show a composition bias toward polar residues.

Post-translationally, proteolytically cleaved as it is secreted and in the recipient female. As to expression, main cells of the accessory glands of males.

It is found in the secreted. It localises to the extracellular space. Its function is as follows. This protein is transferred from male to female's hemolymph during mating, affecting egglaying and behavior after mating. This Drosophila mauritiana (Fruit fly) protein is Accessory gland-specific peptide 26Aa (Acp26Aa).